A 58-amino-acid polypeptide reads, in one-letter code: Small ribosomal subunit protein bS21 (58 aa).

The span at 32-42 (ARRREHYEKPS) shows a compositional bias: basic and acidic residues. The segment at 32–58 (ARRREHYEKPSVRRKKKSEAARKRRWH) is disordered. A compositionally biased stretch (basic residues) spans 43–58 (VRRKKKSEAARKRRWH).

It belongs to the bacterial ribosomal protein bS21 family.

In Moorella thermoacetica (strain ATCC 39073 / JCM 9320), this protein is Small ribosomal subunit protein bS21.